The sequence spans 450 residues: NADP-specific glutamate dehydrogenase (450 aa).

The active site involves Lys111.

This sequence belongs to the Glu/Leu/Phe/Val dehydrogenases family. Homohexamer.

It carries out the reaction L-glutamate + NADP(+) + H2O = 2-oxoglutarate + NH4(+) + NADPH + H(+). The protein is NADP-specific glutamate dehydrogenase of Hebeloma cylindrosporum.